We begin with the raw amino-acid sequence, 162 residues long: Ribosome maturation factor RimP (162 aa).

Belongs to the RimP family.

Its subcellular location is the cytoplasm. Its function is as follows. Required for maturation of 30S ribosomal subunits. The polypeptide is Ribosome maturation factor RimP (Syntrophotalea carbinolica (strain DSM 2380 / NBRC 103641 / GraBd1) (Pelobacter carbinolicus)).